A 266-amino-acid polypeptide reads, in one-letter code: Coiled-coil domain-containing glutamate-rich protein 2 (266 aa).

Residues 1–23 (MPPRGPASELLLLRLLLLGAATA) form the signal peptide. 4 stretches are compositionally biased toward basic and acidic residues: residues 90–100 (EAGKMRSSQEV), 154–188 (LWQRHLENGGDLQKRVAEKASDKETAQFQAEEKGV), 204–213 (GGGERREDLP), and 221–266 (QPEA…RREG). The tract at residues 90–266 (EAGKMRSSQE…TLGEQLRREG (177 aa)) is disordered.

In terms of tissue distribution, expressed at higher levels in fetal brain and skeletal muscle. Lower expression is detected in fetal kidney, liver, spleen, thymus, heart and lung.

Its subcellular location is the secreted. The sequence is that of Coiled-coil domain-containing glutamate-rich protein 2 (CCER2) from Homo sapiens (Human).